Reading from the N-terminus, the 617-residue chain is Sodium-coupled monocarboxylate transporter 2 (617 aa).

At 1–5 (MEVKN) the chain is on the extracellular side. Residues 6–26 (FAVWDYVVFAALFIISSGIGV) traverse the membrane as a helical segment. Residues 27 to 47 (FYAIKERKKATSREFLVGGRQ) are Cytoplasmic-facing. Residues 48-68 (MSFGPVALSLTASFMSAVTVL) traverse the membrane as a helical segment. Residues 69–80 (GTPADVYRFGAS) are Extracellular-facing. A helical transmembrane segment spans residues 81-101 (FVLFFITYGLVIILTSELFLP). Topologically, residues 102–128 (VFYRSGITSTYEYLQLRFNKPVRYAAT) are cytoplasmic. A helical membrane pass occupies residues 129–149 (VIYIVQTILYTGVVVYAPALA). At 150 to 157 (LNQVTGFD) the chain is on the extracellular side. A helical transmembrane segment spans residues 158–178 (LWGSVFATGIVCTFYCTLGGL). Residues 179–180 (KA) are Cytoplasmic-facing. Residues 181 to 201 (VVWTDAFQMVVMIVGFLTVLI) traverse the membrane as a helical segment. The Extracellular portion of the chain corresponds to 202–235 (QGSTYAGGLHNVLEQAENGSRLNIFDFDIDPLRR). Asn219 carries an N-linked (GlcNAc...) asparagine glycan. The helical transmembrane segment at 236–256 (HTFWTISVGGTFTWLGIYGVN) threads the bilayer. Residues 257 to 273 (QSTIQRCISCKTEKHAK) are Cytoplasmic-facing. The chain crosses the membrane as a helical span at residues 274–294 (LALYFNLLGLWIILLCAVFSG). Residues 295–334 (LTMYAHFKDCDPWTSGIISAPDQLMPYFVMELFSTMPGLP) are Extracellular-facing. The chain crosses the membrane as a helical span at residues 335 to 357 (GLFVACAFSGTLSTVAASINALA). At 358–385 (TVTFEDFVKSCFPRLSDKLSTWISKGLC) the chain is on the cytoplasmic side. A helical transmembrane segment spans residues 386–406 (LLFGVICTSTAVAASLMGGVI). Residues 407–411 (QAALS) are Extracellular-facing. The helical transmembrane segment at 412 to 432 (IHGMCGGPMLGLFSLGILFPF) threads the bilayer. The Cytoplasmic portion of the chain corresponds to 433-437 (VNWKG). The helical transmembrane segment at 438–458 (ALAGLLTGILLSFWVAIGAFI) threads the bilayer. Residues 459–507 (YPAPASKTWPLPLSTDQCGLSNVTESVPPVLSSRPAIAETWYALSYLHY) are Extracellular-facing. The N-linked (GlcNAc...) asparagine glycan is linked to Asn480. A helical transmembrane segment spans residues 508–528 (STVGCLGCIAAGVIISFLTGL). Residues 529–617 (QKGKDIPPLL…NMALEKITHF (89 aa)) are Cytoplasmic-facing.

This sequence belongs to the sodium:solute symporter (SSF) (TC 2.A.21) family.

The protein resides in the apical cell membrane. It catalyses the reaction (S)-lactate(out) + Na(+)(out) = (S)-lactate(in) + Na(+)(in). It carries out the reaction nicotinate(out) + Na(+)(out) = nicotinate(in) + Na(+)(in). The enzyme catalyses pyruvate(out) + Na(+)(out) = pyruvate(in) + Na(+)(in). The catalysed reaction is propanoate(out) + Na(+)(out) = propanoate(in) + Na(+)(in). It catalyses the reaction butanoate(out) + Na(+)(out) = butanoate(in) + Na(+)(in). It carries out the reaction acetoacetate(out) + Na(+)(out) = acetoacetate(in) + Na(+)(in). Acts as an electroneutral and low-affinity sodium (Na(+))-dependent sodium-coupled solute transporter. Catalyzes the transport across the plasma membrane of many monocarboxylates such as lactate, pyruvate, nicotinate, propionate, butyrate and beta-D-hydroxybutyrate. May be responsible for the first step of reabsorption of monocarboxylates from the lumen of the proximal tubule of the kidney and the small intestine. May play also a role in monocarboxylates transport in the retina. Mediates electroneutral uptake of lactate, with a stoichiometry of 2 Na(+) for each lactate. This Bos taurus (Bovine) protein is Sodium-coupled monocarboxylate transporter 2 (SLC5A12).